A 214-amino-acid chain; its full sequence is Eukaryotic translation initiation factor 4E-1B (214 aa).

MRNA-binding positions include 53–54, 99–100, 154–159, and 202–204; these read WQ, WE, RAKGDK, and TKS.

In terms of tissue distribution, ovary, muscle and testis.

It is found in the cytoplasm. It localises to the nucleus. Its function is as follows. Does not appear to be a mRNA-cap-binding protein. In Danio rerio (Zebrafish), this protein is Eukaryotic translation initiation factor 4E-1B.